Reading from the N-terminus, the 238-residue chain is Sugar fermentation stimulation protein homolog (238 aa).

The protein belongs to the SfsA family.

The protein is Sugar fermentation stimulation protein homolog of Brucella abortus (strain S19).